The following is a 408-amino-acid chain: Elongation factor Tu (408 aa).

The 210-residue stretch at 10 to 219 (KTHVNVGTIG…ALDTYIPDPV (210 aa)) folds into the tr-type G domain. GTP is bound by residues 19–26 (GHVDHGKT), 88–92 (DCPGH), and 143–146 (NKCD). Thr-26 contributes to the Mg(2+) binding site.

It belongs to the TRAFAC class translation factor GTPase superfamily. Classic translation factor GTPase family. EF-Tu/EF-1A subfamily. As to quaternary structure, monomer.

Its subcellular location is the cytoplasm. The enzyme catalyses GTP + H2O = GDP + phosphate + H(+). In terms of biological role, GTP hydrolase that promotes the GTP-dependent binding of aminoacyl-tRNA to the A-site of ribosomes during protein biosynthesis. The polypeptide is Elongation factor Tu (Brachyspira hyodysenteriae (strain ATCC 49526 / WA1)).